We begin with the raw amino-acid sequence, 333 residues long: Probable cytosolic iron-sulfur protein assembly protein ciao1-B (333 aa).

7 WD repeats span residues 14-53 (HPDSRCWYVAWNPKGTLLASCGGDRTIRIWGREGDSWECK), 59-98 (GHQRTVRKVAWSPCGNYLASASFDATTCIWKKKNDDFECL), 103-142 (GHENEVKCVAWAPSGNLLATCSRDKSVWIWEVDEENEYEC), 148-187 (SHTQDVKHVVWHPTQELLASCSYDNNVCVYKEEDDDWECR), 192-231 (GHTSTVWGLTFDPSGQRLASCSDDCTVKIWKECQPEGGQE), 246-285 (FHGRTVYDIAWCPLTGALATACGDDGVRVFKEDETADPDQ), and 297-333 (AHTQDVNCIAWHPKEAGLLVSCSDNGEIAVWNYQSGV).

The protein belongs to the WD repeat CIA1 family. As to quaternary structure, component of the CIA complex.

Functionally, key component of the cytosolic iron-sulfur protein assembly (CIA) complex, a multiprotein complex that mediates the incorporation of iron-sulfur cluster into extramitochondrial Fe/S proteins. The polypeptide is Probable cytosolic iron-sulfur protein assembly protein ciao1-B (ciao1b) (Salmo salar (Atlantic salmon)).